A 60-amino-acid chain; its full sequence is Defensin-like protein 4 (60 aa).

4 cysteine pairs are disulfide-bonded: C4/C56, C17/C41, C26/C51, and C30/C53.

Belongs to the DEFL family. Protease inhibitor I18 (RTI/MTI-2) subfamily.

The protein localises to the secreted. Inhibits trypsin and chymotrypsin. The polypeptide is Defensin-like protein 4 (Brassica napus (Rape)).